A 118-amino-acid polypeptide reads, in one-letter code: T cell receptor gamma variable 5 (118 aa).

Residues 1–17 (MRWALLVLLAFLSPASQ) form the signal peptide. The Ig-like domain occupies 18–118 (KSSNLEGGTK…GVYYCATWDR (101 aa)). A disulfide bridge links Cys41 with Cys113. Asn106 is a glycosylation site (N-linked (GlcNAc...) asparagine).

In terms of assembly, gamma-delta TR is a heterodimer composed of a gamma and delta chain; disulfide-linked. The gamma-delta TR is associated with the transmembrane signaling CD3 coreceptor proteins following the stoichiometry: a single gamma-delta TR heterodimer associates with one CD3D-CD3E heterodimer, one CD3G-CD3E heterodimer and one CD247 homodimer forming a stable octameric structure. Upon activation, gamma-delta TR complex associates with FCER1G to initiate intracellular signaling.

It is found in the cell membrane. V region of the variable domain of T cell receptor (TR) gamma chain that participates in the antigen recognition. Gamma-delta TRs recognize a variety of self and foreign non-peptide antigens frequently expressed at the epithelial boundaries between the host and external environment, including endogenous lipids presented by MH-like protein CD1D and phosphoantigens presented by butyrophilin-like molecule BTN3A1. Upon antigen recognition induces rapid, innate-like immune responses involved in pathogen clearance and tissue repair. Binding of gamma-delta TR complex to antigen triggers phosphorylation of immunoreceptor tyrosine-based activation motifs (ITAMs) in the CD3 chains by the LCK and FYN kinases, allowing the recruitment, phosphorylation, and activation of ZAP70 that facilitates phosphorylation of the scaffolding proteins LCP2 and LAT. This lead to the formation of a supramolecular signalosome that recruits the phospholipase PLCG1, resulting in calcium mobilization and ERK activation, ultimately leading to T cell expansion and differentiation into effector cells. Gamma-delta TRs are produced through somatic rearrangement of a limited repertoire of variable (V), diversity (D), and joining (J) genes. The potential diversity of gamma-delta TRs is conferred by the unique ability to rearrange (D) genes in tandem and to utilize all three reading frames. The combinatorial diversity is considerably increased by the sequence exonuclease trimming and random nucleotide (N) region additions which occur during the V-(D)-J rearrangements. This is T cell receptor gamma variable 5 from Homo sapiens (Human).